Reading from the N-terminus, the 808-residue chain is Digalactosyldiacylglycerol synthase 1, chloroplastic (808 aa).

The interval 1 to 23 (MVKETLIPPSSTSMTTGTSSSSS) is disordered. A chloroplast-targeting transit peptide spans 1–58 (MVKETLIPPSSTSMTTGTSSSSSLSMTLSSTNALSFLSKGWREVWDSADADLQLMRDR). The segment covering 10–23 (SSTSMTTGTSSSSS) has biased composition (low complexity).

It belongs to the glycosyltransferase group 1 family. Glycosyltransferase 4 subfamily.

It is found in the plastid. Its subcellular location is the chloroplast outer membrane. The catalysed reaction is a 1,2-diacyl-3-O-(beta-D-galactosyl)-sn-glycerol + UDP-alpha-D-galactose = a 1,2-diacyl-3-O-[alpha-D-galactosyl-(1-&gt;6)-beta-D-galactosyl]-sn-glycerol + UDP + H(+). Functionally, involved in the synthesis of diacylglycerol galactolipids that are specifically found in thylakoid membranes. Specific for alpha-glycosidic linkages. Responsible for the final assembly of galactolipids in photosynthetic membranes. Digalactosyldiacylglycerol (DGDG) provides stability to the photosystem I (PSI) complex, especially to the PsaA, PsaB, PsaC, PsaL and PsaH subunits. This Arabidopsis thaliana (Mouse-ear cress) protein is Digalactosyldiacylglycerol synthase 1, chloroplastic.